Consider the following 151-residue polypeptide: Large ribosomal subunit protein bL9 (151 aa).

This sequence belongs to the bacterial ribosomal protein bL9 family.

Functionally, binds to the 23S rRNA. The polypeptide is Large ribosomal subunit protein bL9 (Rhodococcus jostii (strain RHA1)).